The sequence spans 338 residues: uncharacterized protein (338 aa).

3 helical membrane-spanning segments follow: residues 11 to 31, 249 to 269, and 318 to 338; these read ILSL…TFAI, IAVF…IIPA, and VPTP…GLGL.

The protein resides in the cell membrane. This is an uncharacterized protein from Methanocaldococcus jannaschii (strain ATCC 43067 / DSM 2661 / JAL-1 / JCM 10045 / NBRC 100440) (Methanococcus jannaschii).